Here is an 82-residue protein sequence, read N- to C-terminus: Endocuticle structural glycoprotein SgAbd-5 (82 aa).

Gln1 bears the Pyrrolidone carboxylic acid mark. Positions 18–82 (LGQYNFAYRT…ENGYQPRVQS (65 aa)) constitute a Chitin-binding type R&amp;R domain.

In terms of biological role, component of the soft endocuticle of desert locust. This is Endocuticle structural glycoprotein SgAbd-5 from Schistocerca gregaria (Desert locust).